Here is a 270-residue protein sequence, read N- to C-terminus: tRNA pseudouridine synthase A (270 aa).

Asp-55 serves as the catalytic Nucleophile. Tyr-110 contacts substrate.

Belongs to the tRNA pseudouridine synthase TruA family.

The catalysed reaction is uridine(38/39/40) in tRNA = pseudouridine(38/39/40) in tRNA. Its function is as follows. Formation of pseudouridine at positions 38, 39 and 40 in the anticodon stem and loop of transfer RNAs. This Methanoculleus marisnigri (strain ATCC 35101 / DSM 1498 / JR1) protein is tRNA pseudouridine synthase A.